The following is a 180-amino-acid chain: uncharacterized protein (180 aa).

A Nudix hydrolase domain is found at 35 to 163 (LRHRATYIVV…TPDSLKALAL (129 aa)). Residues 72-94 (GGVVQADEQLLESARREAEEELG) carry the Nudix box motif. Mg(2+)-binding residues include Glu-88 and Glu-92.

It belongs to the Nudix hydrolase family. Mg(2+) serves as cofactor.

This is an uncharacterized protein from Escherichia coli O157:H7.